We begin with the raw amino-acid sequence, 631 residues long: Phosphomethylpyrimidine synthase (631 aa).

Residues asparagine 239, methionine 268, tyrosine 297, histidine 333, serine 353–glycine 355, aspartate 394–arginine 397, and glutamate 433 each bind substrate. Zn(2+) is bound at residue histidine 437. Tyrosine 460 provides a ligand contact to substrate. Histidine 501 provides a ligand contact to Zn(2+). [4Fe-4S] cluster contacts are provided by cysteine 581, cysteine 584, and cysteine 589.

It belongs to the ThiC family. Homodimer. The cofactor is [4Fe-4S] cluster.

It catalyses the reaction 5-amino-1-(5-phospho-beta-D-ribosyl)imidazole + S-adenosyl-L-methionine = 4-amino-2-methyl-5-(phosphooxymethyl)pyrimidine + CO + 5'-deoxyadenosine + formate + L-methionine + 3 H(+). It functions in the pathway cofactor biosynthesis; thiamine diphosphate biosynthesis. In terms of biological role, catalyzes the synthesis of the hydroxymethylpyrimidine phosphate (HMP-P) moiety of thiamine from aminoimidazole ribotide (AIR) in a radical S-adenosyl-L-methionine (SAM)-dependent reaction. The polypeptide is Phosphomethylpyrimidine synthase (Salmonella paratyphi B (strain ATCC BAA-1250 / SPB7)).